We begin with the raw amino-acid sequence, 357 residues long: F-box only protein 25 (357 aa).

Residues 1-83 (MPFLGQDWRS…DTAAHSFYRE (83 aa)) form an interaction with beta-actin region. The 48-residue stretch at 224 to 271 (GLTLSDLPLHMLNNILYRFSDGWDIVTLGQVTPTLYMLSEDRRLWKRL) folds into the F-box domain.

In terms of assembly, part of a SCF (SKP1-cullin-F-box) protein ligase complex consisting of FBXO25, SKP1, CUL1 and RBX1. Interacts directly with SKP1 and CUL1. Interacts (via C-terminus) with actin (via N-terminus).

The protein localises to the nucleus. The protein operates within protein modification; protein ubiquitination. Its function is as follows. Substrate-recognition component of the SCF (SKP1-CUL1-F-box protein)-type E3 ubiquitin ligase complex. May play a role in accumulation of expanded polyglutamine (polyQ) protein huntingtin (HTT). The sequence is that of F-box only protein 25 (Fbxo25) from Rattus norvegicus (Rat).